Here is a 171-residue protein sequence, read N- to C-terminus: Ribosome maturation factor RimM (171 aa).

Residues 93–167 (DGVYYYKDIF…KVYVELMEGL (75 aa)) form the PRC barrel domain.

Belongs to the RimM family. Binds ribosomal protein uS19.

Its subcellular location is the cytoplasm. Its function is as follows. An accessory protein needed during the final step in the assembly of 30S ribosomal subunit, possibly for assembly of the head region. Essential for efficient processing of 16S rRNA. May be needed both before and after RbfA during the maturation of 16S rRNA. It has affinity for free ribosomal 30S subunits but not for 70S ribosomes. The polypeptide is Ribosome maturation factor RimM (Lactobacillus helveticus (strain DPC 4571)).